A 57-amino-acid chain; its full sequence is Large ribosomal subunit protein bL32c (57 aa).

It belongs to the bacterial ribosomal protein bL32 family.

It is found in the plastid. The protein resides in the chloroplast. In Liriodendron tulipifera (Tuliptree), this protein is Large ribosomal subunit protein bL32c.